We begin with the raw amino-acid sequence, 304 residues long: Ribosomal protein L11 methyltransferase (304 aa).

Residues threonine 156, glycine 177, aspartate 199, and asparagine 240 each coordinate S-adenosyl-L-methionine.

Belongs to the methyltransferase superfamily. PrmA family.

It localises to the cytoplasm. It carries out the reaction L-lysyl-[protein] + 3 S-adenosyl-L-methionine = N(6),N(6),N(6)-trimethyl-L-lysyl-[protein] + 3 S-adenosyl-L-homocysteine + 3 H(+). In terms of biological role, methylates ribosomal protein L11. The polypeptide is Ribosomal protein L11 methyltransferase (Symbiobacterium thermophilum (strain DSM 24528 / JCM 14929 / IAM 14863 / T)).